A 589-amino-acid polypeptide reads, in one-letter code: Sentrin-specific protease 2 (589 aa).

The Nuclear localization signal signature appears at 28-31 (KRRR). Phosphoserine is present on Ser-32. Positions 46–51 (PAKRPR) match the Nuclear localization signal motif. The segment at 155-176 (SEGCNRRPGGRRHSKGNPESSL) is disordered. A Nuclear export signal motif is present at residues 317–332 (LEPDLSEEVSARLRLG). Phosphoserine occurs at positions 333 and 344. The segment at 396 to 560 (RITRGDIQTL…FTCKYADYIS (165 aa)) is protease. Active-site residues include His-478 and Asp-495. Cys-548 functions as the Nucleophile in the catalytic mechanism.

It belongs to the peptidase C48 family. Binds to SUMO2 and SUMO3. Interacts with the C-terminal domain of NUP153 via its N-terminus. Interacts with MTA1. In terms of processing, polyubiquitinated; which leads to proteasomal degradation.

Its subcellular location is the nucleus. The protein localises to the nuclear pore complex. It localises to the nucleus membrane. The protein resides in the cytoplasm. Functionally, protease that catalyzes two essential functions in the SUMO pathway. The first is the hydrolysis of an alpha-linked peptide bond at the C-terminal end of the small ubiquitin-like modifier (SUMO) propeptides, SUMO1, SUMO2 and SUMO3 leading to the mature form of the proteins. The second is the deconjugation of SUMO1, SUMO2 and SUMO3 from targeted proteins, by cleaving an epsilon-linked peptide bond between the C-terminal glycine of the mature SUMO and the lysine epsilon-amino group of the target protein. May down-regulate CTNNB1 levels and thereby modulate the Wnt pathway. Deconjugates SUMO2 from MTA1. Plays a dynamic role in adipogenesis by desumoylating and promoting the stabilization of CEBPB. Acts as a regulator of the cGAS-STING pathway by catalyzing desumoylation of CGAS and STING1 during the late phase of viral infection. The protein is Sentrin-specific protease 2 of Homo sapiens (Human).